Reading from the N-terminus, the 440-residue chain is Argininosuccinate lyase (440 aa).

It belongs to the lyase 1 family. Argininosuccinate lyase subfamily.

It localises to the cytoplasm. The catalysed reaction is 2-(N(omega)-L-arginino)succinate = fumarate + L-arginine. Its pathway is amino-acid biosynthesis; L-arginine biosynthesis; L-arginine from L-ornithine and carbamoyl phosphate: step 3/3. This Clostridium botulinum (strain ATCC 19397 / Type A) protein is Argininosuccinate lyase.